A 280-amino-acid polypeptide reads, in one-letter code: Chaperone protein LppX (280 aa).

A signal peptide spans 1 to 18 (MRKWLIFLLIAAVAGLSA). A lipid anchor (N-palmitoyl cysteine) is attached at C19. Residue C19 is the site of S-diacylglycerol cysteine attachment.

It is found in the cell membrane. In terms of biological role, is required for the expression of the adjacently encoded xylanase Xyn11E in an active form. LppX seems to act as a specific chaperone necessary for the correct folding of the xylanase during secretion across the cytoplasmic membrane. The sequence is that of Chaperone protein LppX from Paenibacillus barcinonensis.